A 570-amino-acid polypeptide reads, in one-letter code: Dihydroxy-acid dehydratase (570 aa).

Residue Cys61 coordinates [2Fe-2S] cluster. Asp94 is a Mg(2+) binding site. Residue Cys135 coordinates [2Fe-2S] cluster. 2 residues coordinate Mg(2+): Asp136 and Lys137. At Lys137 the chain carries N6-carboxylysine. A [2Fe-2S] cluster-binding site is contributed by Cys207. Glu459 lines the Mg(2+) pocket. Ser485 (proton acceptor) is an active-site residue.

The protein belongs to the IlvD/Edd family. As to quaternary structure, homodimer. It depends on [2Fe-2S] cluster as a cofactor. Requires Mg(2+) as cofactor.

The enzyme catalyses (2R)-2,3-dihydroxy-3-methylbutanoate = 3-methyl-2-oxobutanoate + H2O. The catalysed reaction is (2R,3R)-2,3-dihydroxy-3-methylpentanoate = (S)-3-methyl-2-oxopentanoate + H2O. Its pathway is amino-acid biosynthesis; L-isoleucine biosynthesis; L-isoleucine from 2-oxobutanoate: step 3/4. It functions in the pathway amino-acid biosynthesis; L-valine biosynthesis; L-valine from pyruvate: step 3/4. Functionally, functions in the biosynthesis of branched-chain amino acids. Catalyzes the dehydration of (2R,3R)-2,3-dihydroxy-3-methylpentanoate (2,3-dihydroxy-3-methylvalerate) into 2-oxo-3-methylpentanoate (2-oxo-3-methylvalerate) and of (2R)-2,3-dihydroxy-3-methylbutanoate (2,3-dihydroxyisovalerate) into 2-oxo-3-methylbutanoate (2-oxoisovalerate), the penultimate precursor to L-isoleucine and L-valine, respectively. The sequence is that of Dihydroxy-acid dehydratase from Lactococcus lactis subsp. lactis (strain IL1403) (Streptococcus lactis).